The chain runs to 394 residues: Probable aspartate/prephenate aminotransferase (394 aa).

Glycine 40, tryptophan 126, and asparagine 176 together coordinate L-aspartate. An N6-(pyridoxal phosphate)lysine modification is found at lysine 239. Position 370 (arginine 370) interacts with L-aspartate.

The protein belongs to the class-I pyridoxal-phosphate-dependent aminotransferase family. In terms of assembly, homodimer. Pyridoxal 5'-phosphate is required as a cofactor.

The protein localises to the cytoplasm. It carries out the reaction L-aspartate + 2-oxoglutarate = oxaloacetate + L-glutamate. The catalysed reaction is L-arogenate + oxaloacetate = prephenate + L-aspartate. Catalyzes the reversible conversion of aspartate and 2-oxoglutarate to glutamate and oxaloacetate. Can also transaminate prephenate in the presence of aspartate. In Aquifex aeolicus (strain VF5), this protein is Probable aspartate/prephenate aminotransferase (aspC).